The following is a 261-amino-acid chain: Glucose 1-dehydrogenase 3 (261 aa).

11 to 35 contacts NAD(+); sequence VITGGSTGLGRAMAVRFGQEEAKVV. Residue serine 145 coordinates substrate. The Proton acceptor role is filled by tyrosine 158.

The protein belongs to the short-chain dehydrogenases/reductases (SDR) family. In terms of assembly, homotetramer.

The catalysed reaction is D-glucose + NAD(+) = D-glucono-1,5-lactone + NADH + H(+). The enzyme catalyses D-glucose + NADP(+) = D-glucono-1,5-lactone + NADPH + H(+). The chain is Glucose 1-dehydrogenase 3 (gdhIII) from Priestia megaterium (Bacillus megaterium).